Consider the following 345-residue polypeptide: Putative F-box protein At3g17265 (345 aa).

One can recognise an F-box domain in the interval 1-46 (MMFAYLPPDLESEILSRVPATFLKELQTTCKRWYALFRDPIFVKKN).

This is Putative F-box protein At3g17265 from Arabidopsis thaliana (Mouse-ear cress).